The following is a 361-amino-acid chain: Arginine N(omega)-methyltransferase (361 aa).

Positions 1-17 are enriched in basic and acidic residues; sequence MRHVQEARAVPAEHEAR. The tract at residues 1 to 24 is disordered; sequence MRHVQEARAVPAEHEARPAPVTMP. The SAM-dependent MTase PRMT-type domain maps to 65–361; the sequence is DADAFAQIAR…WSDFTLRVSI (297 aa).

Belongs to the class I-like SAM-binding methyltransferase superfamily. Protein arginine N-methyltransferase family.

The catalysed reaction is L-arginine + S-adenosyl-L-methionine = N(omega)-methyl-L-arginine + S-adenosyl-L-homocysteine + H(+). The protein operates within antibiotic biosynthesis. Its function is as follows. Involved in the biosynthesis of the glucosamine-nitrosourea antibiotic streptozotocin (SZN). Catalyzes the conversion of L-arginine to N(omega)-methyl-L-arginine (L-NMA), using S-adenosyl-L-methionine (SAM) as a methyl donor. This chain is Arginine N(omega)-methyltransferase, found in Streptomyces achromogenes subsp. streptozoticus.